The primary structure comprises 471 residues: Glutamate--tRNA ligase (471 aa).

A 'HIGH' region motif is present at residues 9-19 (PSPTGYLHVGG). Zn(2+) contacts are provided by cysteine 98, cysteine 100, cysteine 125, and histidine 127. The short motif at 237-241 (KLSKR) is the 'KMSKS' region element. Lysine 240 provides a ligand contact to ATP.

This sequence belongs to the class-I aminoacyl-tRNA synthetase family. Glutamate--tRNA ligase type 1 subfamily. As to quaternary structure, monomer. It depends on Zn(2+) as a cofactor.

The protein resides in the cytoplasm. The enzyme catalyses tRNA(Glu) + L-glutamate + ATP = L-glutamyl-tRNA(Glu) + AMP + diphosphate. Catalyzes the attachment of glutamate to tRNA(Glu) in a two-step reaction: glutamate is first activated by ATP to form Glu-AMP and then transferred to the acceptor end of tRNA(Glu). This Escherichia coli O6:K15:H31 (strain 536 / UPEC) protein is Glutamate--tRNA ligase.